The following is a 76-amino-acid chain: Gas vesicle protein A1 (76 aa).

Binds to GvpF1 regions lie at residues 1 to 22 and 2 to 43; these read MAQPDSSGLAEVLDRVLDKGVV and AQPD…EARV. An alpha helix 1 region spans residues 9 to 19; the sequence is LAEVLDRVLDK. The segment at 23–31 is beta-strand 1; sequence VDVWARVSL. A beta turn region spans residues 32–34; it reads VGI. A beta-strand 2 region spans residues 35 to 43; sequence EILTVEARV. Positions 48 to 67 are alpha helix 2; that stretch reads VDTFLHYAEEIAKIEQAELT.

It belongs to the gas vesicle GvpA family. Major component of the gas vesicle shell which is 2 nm thick and consists of a single layer of the protein. It forms 4.6 nm-wide ribs nearly perpendicular to the long axis of the vesicle. Modeled as antiparallel homodimers. The ribs form a low-pitch helix rather than a stack of hoops. Interacts with GvpF1 via its N-terminus (residues 1-43) in early growth stages, none of the other GvpG1 to GvpM1 proteins were seen to directly bind GvpA1 in H.volcanii experiments. Might interact with GvpJ1. Might interact with GvpG1, GvpH1, GvpJ1, GvpM1, GvpN1 and GvpO1.

The protein localises to the gas vesicle shell. Its function is as follows. Gas vesicles are hollow, gas filled proteinaceous nanostructures found in several microbial planktonic microorganisms. They allow positioning of halobacteria at the optimal depth for growth in the poorly aerated shallow brine pools of their habitat. GvpA forms the protein shell. The critical collapse pressure (CCP) of p-vac gas vesicles is 0.66 MPa; mutating residues in p-gvpA to those found in c-gvpA increases the CCP. These residues partially and independently control the width and strength of gas vesicles. In stationary phase gas vesicles, about 30 times more GvpA1 is found than GvpA2. Expression of a 9.5 kb p-vac DNA fragment containing 2 divergently transcribed regions (gvpD-gvpE-gvpF-gvpG-gvpH-gvpI-gvpJ-gvpK-gvpL-gvpM and gvpA-gvpC-gvpN-gvpO) allows H.volcanii to produce gas vesicles. All site-directed mutagenesis is tested in H.volcanii. A minimal gas vesicle can be made in H.volcanii by gvpA1-gvpO1 plus gvpF1-gvpG1-gvpJ1-gvpK1-gvpL1-gvpM1; lack of enough GvpJ1 prevents their formation. A similar region restores gas vesicle production in H.halobium without the p-vac locus, but it still has the c-vac locus. This Halobacterium salinarum (strain ATCC 700922 / JCM 11081 / NRC-1) (Halobacterium halobium) protein is Gas vesicle protein A1.